The primary structure comprises 123 residues: Fluoride-specific ion channel FluC 2 (123 aa).

The next 3 membrane-spanning stretches (helical) occupy residues 30–50 (FPLPTLMINVLGALLLGFVAG), 68–88 (VGFIGSFTTFSTWSVDTVLLL), and 93–113 (WPLALANVGISLAVGLAAVWV). Residues Gly-72 and Thr-75 each coordinate Na(+).

It belongs to the fluoride channel Fluc/FEX (TC 1.A.43) family.

The protein resides in the cell membrane. It carries out the reaction fluoride(in) = fluoride(out). Its activity is regulated as follows. Na(+) is not transported, but it plays an essential structural role and its presence is essential for fluoride channel function. Functionally, fluoride-specific ion channel. Important for reducing fluoride concentration in the cell, thus reducing its toxicity. This is Fluoride-specific ion channel FluC 2 from Symbiobacterium thermophilum (strain DSM 24528 / JCM 14929 / IAM 14863 / T).